We begin with the raw amino-acid sequence, 310 residues long: HTH-type transcriptional regulator PunR (310 aa).

The HTH lysR-type domain maps to 2 to 59 (WSEYSLEVVDAVARNGSFSAAAQELHRVPSAVSYTVRQLEEWLAVPLFERRHRDVELT). Positions 19-38 (FSAAAQELHRVPSAVSYTVR) form a DNA-binding region, H-T-H motif.

This sequence belongs to the LysR transcriptional regulatory family.

It is found in the cytoplasm. Transcriptional regulator that activates the expression of punC, which encodes a purine nucleoside transporter. In Escherichia coli O157:H7, this protein is HTH-type transcriptional regulator PunR.